The chain runs to 339 residues: D-erythrose-4-phosphate dehydrogenase (339 aa).

NAD(+) contacts are provided by residues 12–13 (RI) and arginine 81. Substrate-binding positions include 154 to 156 (SCT), arginine 200, 213 to 214 (TK), and arginine 236. The active-site Nucleophile is cysteine 155. Asparagine 318 is an NAD(+) binding site.

This sequence belongs to the glyceraldehyde-3-phosphate dehydrogenase family. Epd subfamily. In terms of assembly, homotetramer.

It localises to the cytoplasm. The enzyme catalyses D-erythrose 4-phosphate + NAD(+) + H2O = 4-phospho-D-erythronate + NADH + 2 H(+). It functions in the pathway cofactor biosynthesis; pyridoxine 5'-phosphate biosynthesis; pyridoxine 5'-phosphate from D-erythrose 4-phosphate: step 1/5. In terms of biological role, catalyzes the NAD-dependent conversion of D-erythrose 4-phosphate to 4-phosphoerythronate. This chain is D-erythrose-4-phosphate dehydrogenase, found in Escherichia coli (strain UTI89 / UPEC).